A 452-amino-acid polypeptide reads, in one-letter code: Probable alpha-galactosidase B (452 aa).

The first 24 residues, 1-24, serve as a signal peptide directing secretion; the sequence is MLHRATTTAAAAAAAALLLCPVQA. Cys-47 and Cys-79 form a disulfide bridge. N-linked (GlcNAc...) asparagine glycans are attached at residues Asn-87 and Asn-138. An intrachain disulfide couples Cys-129 to Cys-159. Residue Asp-157 is the Nucleophile of the active site. The N-linked (GlcNAc...) asparagine glycan is linked to Asn-184. 231 to 235 contributes to the substrate binding site; it reads DWGQA. Asp-253 functions as the Proton donor in the catalytic mechanism. Asn-292, Asn-391, Asn-409, and Asn-410 each carry an N-linked (GlcNAc...) asparagine glycan.

The protein belongs to the glycosyl hydrolase 27 family.

Its subcellular location is the secreted. It catalyses the reaction Hydrolysis of terminal, non-reducing alpha-D-galactose residues in alpha-D-galactosides, including galactose oligosaccharides, galactomannans and galactolipids.. Functionally, hydrolyzes a variety of simple alpha-D-galactoside as well as more complex molecules such as oligosaccharides and polysaccharides. The protein is Probable alpha-galactosidase B of Talaromyces emersonii (Thermophilic fungus).